Reading from the N-terminus, the 264-residue chain is uncharacterized protein (264 aa).

Transmembrane regions (helical) follow at residues 23 to 43 (LIFLAPFSLFTQIFMVITALI), 59 to 79 (FDTFTYQSNSLAIFLVWYYFL), 91 to 111 (LVLSVTGYLVFTVIFFNFYAL), 150 to 170 (FSELLLHVIHPLFYFIYVGLL), 190 to 210 (AGIYPSIYAFYLQTIPFLNVW), and 233 to 253 (WIWSIPIFASMFLILWMLFVI).

It is found in the cell membrane. This is an uncharacterized protein from Mycoplasma genitalium (strain ATCC 33530 / DSM 19775 / NCTC 10195 / G37) (Mycoplasmoides genitalium).